A 170-amino-acid polypeptide reads, in one-letter code: Co-chaperone protein HscB homolog (170 aa).

Residues Asp-5–Gly-79 enclose the J domain.

It belongs to the HscB family. Interacts with HscA and stimulates its ATPase activity.

In terms of biological role, co-chaperone involved in the maturation of iron-sulfur cluster-containing proteins. Seems to help targeting proteins to be folded toward HscA. The polypeptide is Co-chaperone protein HscB homolog (Bordetella parapertussis (strain 12822 / ATCC BAA-587 / NCTC 13253)).